Reading from the N-terminus, the 293-residue chain is Eukaryotic translation initiation factor 3 subunit F (293 aa).

An N-acetylalanine modification is found at A2. Residues 28-159 (ARIHPLVIFN…IKAFVSSNLS (132 aa)) form the MPN domain.

The protein belongs to the eIF-3 subunit F family. In terms of assembly, component of the eukaryotic translation initiation factor 3 (eIF-3) complex. Binds to TIF3E1 and TIF3H1. Expressed in inflorescences, leaves, stems, siliques, roots and seedlings. Accumulates at highly levels in pollen grains, developing embryos and root tips.

It is found in the cytoplasm. Its function is as follows. Component of the eukaryotic translation initiation factor 3 (eIF-3) complex, which is involved in protein synthesis of a specialized repertoire of mRNAs and, together with other initiation factors, stimulates binding of mRNA and methionyl-tRNAi to the 40S ribosome. The eIF-3 complex specifically targets and initiates translation of a subset of mRNAs involved in cell proliferation (Potential). Involved in cell growth and differentiation, especially during embryogenesis and male gametophyte germination. Regulates sensitivity to sugars (e.g. sucrose). This chain is Eukaryotic translation initiation factor 3 subunit F (TIF3F1), found in Arabidopsis thaliana (Mouse-ear cress).